A 382-amino-acid chain; its full sequence is Queuine tRNA-ribosyltransferase (382 aa).

The active-site Proton acceptor is Asp-96. Residues 96-100, Asp-151, Gln-194, and Gly-221 each bind substrate; that span reads DSGGF. Residues 252 to 258 form an RNA binding region; the sequence is GVGAPDS. The active-site Nucleophile is Asp-271. An RNA binding; important for wobble base 34 recognition region spans residues 276–280; sequence TRIAR. Positions 309, 311, 314, and 340 each coordinate Zn(2+).

It belongs to the queuine tRNA-ribosyltransferase family. In terms of assembly, homodimer. Within each dimer, one monomer is responsible for RNA recognition and catalysis, while the other monomer binds to the replacement base PreQ1. Zn(2+) is required as a cofactor.

The enzyme catalyses 7-aminomethyl-7-carbaguanine + guanosine(34) in tRNA = 7-aminomethyl-7-carbaguanosine(34) in tRNA + guanine. Its pathway is tRNA modification; tRNA-queuosine biosynthesis. In terms of biological role, catalyzes the base-exchange of a guanine (G) residue with the queuine precursor 7-aminomethyl-7-deazaguanine (PreQ1) at position 34 (anticodon wobble position) in tRNAs with GU(N) anticodons (tRNA-Asp, -Asn, -His and -Tyr). Catalysis occurs through a double-displacement mechanism. The nucleophile active site attacks the C1' of nucleotide 34 to detach the guanine base from the RNA, forming a covalent enzyme-RNA intermediate. The proton acceptor active site deprotonates the incoming PreQ1, allowing a nucleophilic attack on the C1' of the ribose to form the product. After dissociation, two additional enzymatic reactions on the tRNA convert PreQ1 to queuine (Q), resulting in the hypermodified nucleoside queuosine (7-(((4,5-cis-dihydroxy-2-cyclopenten-1-yl)amino)methyl)-7-deazaguanosine). In Lactococcus lactis subsp. cremoris (strain MG1363), this protein is Queuine tRNA-ribosyltransferase.